A 417-amino-acid chain; its full sequence is Multifunctional CCA protein (417 aa).

2 residues coordinate ATP: glycine 8 and arginine 11. Residues glycine 8 and arginine 11 each coordinate CTP. 2 residues coordinate Mg(2+): aspartate 21 and aspartate 23. Residues arginine 91, arginine 137, and arginine 140 each contribute to the ATP site. 3 residues coordinate CTP: arginine 91, arginine 137, and arginine 140. Residues 225-326 form the HD domain; it reads SGIHTLMTLQ…LNVLKKTDAF (102 aa).

Belongs to the tRNA nucleotidyltransferase/poly(A) polymerase family. Bacterial CCA-adding enzyme type 1 subfamily. As to quaternary structure, monomer. Can also form homodimers and oligomers. Requires Mg(2+) as cofactor. Ni(2+) is required as a cofactor.

The catalysed reaction is a tRNA precursor + 2 CTP + ATP = a tRNA with a 3' CCA end + 3 diphosphate. It catalyses the reaction a tRNA with a 3' CCA end + 2 CTP + ATP = a tRNA with a 3' CCACCA end + 3 diphosphate. Catalyzes the addition and repair of the essential 3'-terminal CCA sequence in tRNAs without using a nucleic acid template. Adds these three nucleotides in the order of C, C, and A to the tRNA nucleotide-73, using CTP and ATP as substrates and producing inorganic pyrophosphate. tRNA 3'-terminal CCA addition is required both for tRNA processing and repair. Also involved in tRNA surveillance by mediating tandem CCA addition to generate a CCACCA at the 3' terminus of unstable tRNAs. While stable tRNAs receive only 3'-terminal CCA, unstable tRNAs are marked with CCACCA and rapidly degraded. This is Multifunctional CCA protein from Neisseria meningitidis serogroup A / serotype 4A (strain DSM 15465 / Z2491).